Reading from the N-terminus, the 410-residue chain is Arginine deiminase (410 aa).

The active-site Amidino-cysteine intermediate is the Cys-400.

Belongs to the arginine deiminase family.

Its subcellular location is the cytoplasm. It catalyses the reaction L-arginine + H2O = L-citrulline + NH4(+). The protein operates within amino-acid degradation; L-arginine degradation via ADI pathway; carbamoyl phosphate from L-arginine: step 1/2. This Bacillus cereus (strain G9842) protein is Arginine deiminase.